The primary structure comprises 191 residues: Threonylcarbamoyl-AMP synthase (191 aa).

The YrdC-like domain maps to valine 10–alanine 191.

This sequence belongs to the SUA5 family. TsaC subfamily.

Its subcellular location is the cytoplasm. It carries out the reaction L-threonine + hydrogencarbonate + ATP = L-threonylcarbamoyladenylate + diphosphate + H2O. Its function is as follows. Required for the formation of a threonylcarbamoyl group on adenosine at position 37 (t(6)A37) in tRNAs that read codons beginning with adenine. Catalyzes the conversion of L-threonine, HCO(3)(-)/CO(2) and ATP to give threonylcarbamoyl-AMP (TC-AMP) as the acyladenylate intermediate, with the release of diphosphate. The chain is Threonylcarbamoyl-AMP synthase from Saccharophagus degradans (strain 2-40 / ATCC 43961 / DSM 17024).